The following is a 677-amino-acid chain: UvrABC system protein B (677 aa).

The region spanning 27 to 192 (ANLGQGVRDQ…QRNDFDFHRG (166 aa)) is the Helicase ATP-binding domain. ATP is bound at residue 40 to 47 (GVTGSGKT). Positions 93–116 (YYDYYQPEAYVPASDTYIEKDSSI) match the Beta-hairpin motif. The region spanning 432–594 (QVDDLLAECR…IEPRTIRKSL (163 aa)) is the Helicase C-terminal domain. Positions 638 to 673 (AKHIQKLEREMREAAKELEFERAATLRDRIRLLRER) constitute a UVR domain.

This sequence belongs to the UvrB family. In terms of assembly, forms a heterotetramer with UvrA during the search for lesions. Interacts with UvrC in an incision complex.

It is found in the cytoplasm. In terms of biological role, the UvrABC repair system catalyzes the recognition and processing of DNA lesions. A damage recognition complex composed of 2 UvrA and 2 UvrB subunits scans DNA for abnormalities. Upon binding of the UvrA(2)B(2) complex to a putative damaged site, the DNA wraps around one UvrB monomer. DNA wrap is dependent on ATP binding by UvrB and probably causes local melting of the DNA helix, facilitating insertion of UvrB beta-hairpin between the DNA strands. Then UvrB probes one DNA strand for the presence of a lesion. If a lesion is found the UvrA subunits dissociate and the UvrB-DNA preincision complex is formed. This complex is subsequently bound by UvrC and the second UvrB is released. If no lesion is found, the DNA wraps around the other UvrB subunit that will check the other stand for damage. The chain is UvrABC system protein B from Nitratidesulfovibrio vulgaris (strain DP4) (Desulfovibrio vulgaris).